The sequence spans 288 residues: DegV domain-containing protein MYPU_3590 (288 aa).

In terms of domain architecture, DegV spans 3–275 (IAIVIDSSSG…LGAIAISLVK (273 aa)). The hexadecanoate site is built by serine 61 and serine 92.

Functionally, may bind long-chain fatty acids, such as palmitate, and may play a role in lipid transport or fatty acid metabolism. This is DegV domain-containing protein MYPU_3590 from Mycoplasmopsis pulmonis (strain UAB CTIP) (Mycoplasma pulmonis).